The chain runs to 459 residues: E3 ubiquitin-protein ligase RNF14 (459 aa).

The RWD domain occupies 10 to 129 (DELLALASIY…QFLKEETLDF (120 aa)). The disordered stretch occupies residues 141 to 169 (SGSQPQCEPAQKHAADASGEKSKVQDLDP). Basic and acidic residues predominate over residues 150 to 169 (AQKHAADASGEKSKVQDLDP). Residues 200–441 (KAFCCGICYS…NPDSPCYNQL (242 aa)) are TRIAD supradomain. The Zn(2+) site is built by C204, C207, C222, H224, C227, C230, C249, C254, C293, C298, C313, C316, C321, C324, H329, C334, C388, and C391. 2 consecutive RING-type zinc fingers follow at residues 204-249 (CGIC…CLNC) and 204-254 (CGIC…EPKC). The IBR-type zinc finger occupies 273–334 (ARYDRLLLQS…RRSYHGLSHC (62 aa)). An RING-type 2; atypical zinc finger spans residues 388 to 417 (CPCCGTNIQKAHGCNKMTCSSCQKYFCWIC). The active site involves C401. Residues C406, C409, C414, C417, H429, and C437 each coordinate Zn(2+).

Belongs to the RBR family. RNF14 subfamily.

It is found in the cytoplasm. The protein resides in the nucleus. The catalysed reaction is [E2 ubiquitin-conjugating enzyme]-S-ubiquitinyl-L-cysteine + [acceptor protein]-L-lysine = [E2 ubiquitin-conjugating enzyme]-L-cysteine + [acceptor protein]-N(6)-ubiquitinyl-L-lysine.. It participates in protein modification; protein ubiquitination. Its function is as follows. E3 ubiquitin-protein ligase that plays a key role in the RNF14-RNF25 translation quality control pathway, a pathway that takes place when a ribosome has stalled during translation, and which promotes ubiquitination and degradation of translation factors on stalled ribosomes. Recruited to stalled ribosomes by the ribosome collision sensor GCN1 and mediates 'Lys-6'-linked ubiquitination of target proteins, leading to their degradation. Mediates ubiquitination of eef1a1/eEF1A and etf1/eRF1 translation factors on stalled ribosomes, leading to their degradation. Specifically required to resolve RNA-protein cross-links caused by reactive aldehydes, which trigger translation stress by stalling ribosomes: acts by catalying 'Lys-6'-linked ubiquitination of RNA-protein cross-links, leading to their removal by the ATP-dependent unfoldase VCP and subsequent degradation by the proteasome. Independently of its function in the response to stalled ribosomes, acts as a regulator of transcription in Wnt signaling via its interaction with TCF transcription factors (tcf7/tcf1, tcf7l1/tcf3 and tcf7l2/tcf4). The chain is E3 ubiquitin-protein ligase RNF14 from Danio rerio (Zebrafish).